The chain runs to 217 residues: Polyadenylate-binding protein 3 (217 aa).

The tract at residues 1–28 (MEEEEHEVYGGEIPEVGDTDVPDPDIDM) is disordered. Over residues 15-28 (EVGDTDVPDPDIDM) the composition is skewed to acidic residues. Positions 30–71 (AADEDAVTELAEMKRRLKEMEEEAAALREMQAKVEKEMGATQ) form a coiled coil. The necessary for homooligomerization stretch occupies residues 75 to 216 (SMAANQEGKE…FRRPMRYMPY (142 aa)). The RRM domain maps to 89–165 (RSVYVGNVDY…RQLKVSPKRT (77 aa)). The Nuclear localization signal motif lies at 162–169 (PKRTNVPG).

Monomer and homooligomer. Binds RNA as a monomer and oligomerizes when bound to poly(A). Forms a complex with cleavage and polyadenylation specificity factor (CPSF) subunits PAPS4, PABN1, PABN2, CSTF50 and FIPS5. Interacts with CSP3.

It localises to the nucleus speckle. The protein resides in the cytoplasm. Involved in the 3'-end formation of mRNA precursors (pre-mRNA) by the addition of a poly(A) tail of 200-250 nt to the upstream cleavage product. Stimulates poly(A) polymerase (PAPOLA) conferring processivity on the poly(A) tail elongation reaction and also controls the poly(A) tail length. Increases the affinity of poly(A) polymerase for RNA. Binds to poly(A) and to poly(G) with high affinity. May protect the poly(A) tail from degradation. This is Polyadenylate-binding protein 3 from Arabidopsis thaliana (Mouse-ear cress).